Reading from the N-terminus, the 353-residue chain is Adenine deaminase (353 aa).

Residues His-19, His-21, and His-208 each coordinate Zn(2+). The Proton donor role is filled by Glu-211. Position 289 (Asp-289) interacts with Zn(2+). Position 290 (Asp-290) interacts with substrate.

Belongs to the metallo-dependent hydrolases superfamily. Adenosine and AMP deaminases family. Adenine deaminase type 2 subfamily. Zn(2+) serves as cofactor.

Its subcellular location is the cytoplasm. The protein resides in the nucleus. It catalyses the reaction adenine + H2O + H(+) = hypoxanthine + NH4(+). Catalyzes the hydrolytic deamination of adenine to hypoxanthine. Plays an important role in the purine salvage pathway and in nitrogen catabolism. The protein is Adenine deaminase of Gibberella zeae (strain ATCC MYA-4620 / CBS 123657 / FGSC 9075 / NRRL 31084 / PH-1) (Wheat head blight fungus).